Reading from the N-terminus, the 198-residue chain is Protein uvp1 (198 aa).

The Resolvase/invertase-type recombinase catalytic domain occupies 1-140; it reads MIIGYARKST…SGLAAARARG (140 aa). The O-(5'-phospho-DNA)-serine intermediate role is filled by Ser-9. The H-T-H motif DNA-binding region spans 168–187; sequence VGAVAKRFNVSRMTIYRYTT.

Belongs to the site-specific recombinase resolvase family.

Functionally, cooperates with the mucAB genes in the DNA repair process. Could be a resolvase-invertase protein. This is Protein uvp1 (uvp1) from Escherichia coli.